Here is a 389-residue protein sequence, read N- to C-terminus: Chalcone synthase 6 (389 aa).

The active site involves Cys-164.

Belongs to the thiolase-like superfamily. Chalcone/stilbene synthases family.

It carries out the reaction (E)-4-coumaroyl-CoA + 3 malonyl-CoA + 3 H(+) = 2',4,4',6'-tetrahydroxychalcone + 3 CO2 + 4 CoA. It participates in secondary metabolite biosynthesis; flavonoid biosynthesis. The primary product of this enzyme is 4,2',4',6'-tetrahydroxychalcone (also termed naringenin-chalcone or chalcone) which can under specific conditions spontaneously isomerize into naringenin. The sequence is that of Chalcone synthase 6 (CHS6) from Pisum sativum (Garden pea).